The following is a 438-amino-acid chain: GTPase Der (438 aa).

EngA-type G domains follow at residues 4-168 (PIVA…PKGY) and 177-352 (IRIA…TNYS). GTP-binding positions include 10 to 17 (GRPNVGKS), 57 to 61 (DTGGI), 120 to 123 (NKID), 183 to 190 (GKPNVGKS), 230 to 234 (DTAGL), and 295 to 298 (NKWD). Positions 353–437 (KRISTGVLND…GIKMEFRERK (85 aa)) constitute a KH-like domain.

Belongs to the TRAFAC class TrmE-Era-EngA-EngB-Septin-like GTPase superfamily. EngA (Der) GTPase family. In terms of assembly, associates with the 50S ribosomal subunit.

GTPase that plays an essential role in the late steps of ribosome biogenesis. This Clostridium tetani (strain Massachusetts / E88) protein is GTPase Der.